An 82-amino-acid polypeptide reads, in one-letter code: Cytochrome b559 subunit alpha (82 aa).

A helical transmembrane segment spans residues 22–36 (VIHAITLPSIFLAGF). Histidine 24 serves as a coordination point for heme.

Belongs to the PsbE/PsbF family. Heterodimer of an alpha subunit and a beta subunit. PSII is composed of 1 copy each of membrane proteins PsbA, PsbB, PsbC, PsbD, PsbE, PsbF, PsbH, PsbI, PsbJ, PsbK, PsbL, PsbM, PsbT, PsbX, PsbY, PsbZ, Psb30/Ycf12, peripheral proteins PsbO, CyanoQ (PsbQ), PsbU, PsbV and a large number of cofactors. It forms dimeric complexes. Heme b is required as a cofactor.

It is found in the cellular thylakoid membrane. In terms of biological role, this b-type cytochrome is tightly associated with the reaction center of photosystem II (PSII). PSII is a light-driven water:plastoquinone oxidoreductase that uses light energy to abstract electrons from H(2)O, generating O(2) and a proton gradient subsequently used for ATP formation. It consists of a core antenna complex that captures photons, and an electron transfer chain that converts photonic excitation into a charge separation. The protein is Cytochrome b559 subunit alpha of Synechococcus sp. (strain WH7803).